Reading from the N-terminus, the 617-residue chain is Dihydroxy-acid dehydratase (617 aa).

A Mg(2+)-binding site is contributed by Asp-81. Cys-122 is a [2Fe-2S] cluster binding site. Residues Asp-123 and Lys-124 each contribute to the Mg(2+) site. Residue Lys-124 is modified to N6-carboxylysine. Cys-195 contributes to the [2Fe-2S] cluster binding site. Glu-491 contacts Mg(2+). The active-site Proton acceptor is Ser-517.

It belongs to the IlvD/Edd family. Homodimer. It depends on [2Fe-2S] cluster as a cofactor. Mg(2+) is required as a cofactor.

The catalysed reaction is (2R)-2,3-dihydroxy-3-methylbutanoate = 3-methyl-2-oxobutanoate + H2O. It carries out the reaction (2R,3R)-2,3-dihydroxy-3-methylpentanoate = (S)-3-methyl-2-oxopentanoate + H2O. It functions in the pathway amino-acid biosynthesis; L-isoleucine biosynthesis; L-isoleucine from 2-oxobutanoate: step 3/4. It participates in amino-acid biosynthesis; L-valine biosynthesis; L-valine from pyruvate: step 3/4. Its function is as follows. Functions in the biosynthesis of branched-chain amino acids. Catalyzes the dehydration of (2R,3R)-2,3-dihydroxy-3-methylpentanoate (2,3-dihydroxy-3-methylvalerate) into 2-oxo-3-methylpentanoate (2-oxo-3-methylvalerate) and of (2R)-2,3-dihydroxy-3-methylbutanoate (2,3-dihydroxyisovalerate) into 2-oxo-3-methylbutanoate (2-oxoisovalerate), the penultimate precursor to L-isoleucine and L-valine, respectively. This Buchnera aphidicola subsp. Acyrthosiphon pisum (strain 5A) protein is Dihydroxy-acid dehydratase.